The following is a 109-amino-acid chain: Nucleoid-associated protein Bcer98_0019 (109 aa).

This sequence belongs to the YbaB/EbfC family. Homodimer.

The protein localises to the cytoplasm. The protein resides in the nucleoid. Binds to DNA and alters its conformation. May be involved in regulation of gene expression, nucleoid organization and DNA protection. This chain is Nucleoid-associated protein Bcer98_0019, found in Bacillus cytotoxicus (strain DSM 22905 / CIP 110041 / 391-98 / NVH 391-98).